The sequence spans 280 residues: Cell division protein SepF (280 aa).

A disordered region spans residues 22–117; sequence DYVDDRAPRA…DDYPEDAYGE (96 aa). Basic and acidic residues-rich tracts occupy residues 25–36 and 53–83; these read DDRAPRASERGG and RYGE…GADR.

It belongs to the SepF family. As to quaternary structure, homodimer. Interacts with FtsZ.

It localises to the cytoplasm. Cell division protein that is part of the divisome complex and is recruited early to the Z-ring. Probably stimulates Z-ring formation, perhaps through the cross-linking of FtsZ protofilaments. Its function overlaps with FtsA. The sequence is that of Cell division protein SepF from Nocardia farcinica (strain IFM 10152).